Consider the following 525-residue polypeptide: Vesicular inhibitory amino acid transporter (525 aa).

The Cytoplasmic portion of the chain corresponds to 1 to 132; the sequence is MATLLRSKLT…WNVTNAIQGM (132 aa). A helical membrane pass occupies residues 133–153; it reads FVLGLPYAILHGGYLGLFLII. At 154–204 the chain is on the lumenal, vesicle side; sequence FAAVVCCYTGKILIACLYEENEDGEVVRVRDSYVAIANACCAPRFPTLGGR. Tyrosine 186 carries the post-translational modification 3'-nitrotyrosine. The helical transmembrane segment at 205–225 threads the bilayer; the sequence is VVNVAQIIELVMTCILYVVVS. Topologically, residues 226–265 are cytoplasmic; that stretch reads GNLMYNSFPGLPVSQKSWSIIATAVLLPCAFLKNLKAVSK. The chain crosses the membrane as a helical span at residues 266–286; the sequence is FSLLCTLAHFVINILVIAYCL. Residues 287–305 lie on the Lumenal, vesicle side of the membrane; it reads SRARDWAWEKVKFYIDVKK. The helical transmembrane segment at 306–326 threads the bilayer; that stretch reads FPISIGIIVFSYTSQIFLPSL. Over 327–341 the chain is Cytoplasmic; sequence EGNMQQPSEFHCMMN. A helical transmembrane segment spans residues 342-362; the sequence is WTHIAACVLKGLFALVAYLTW. Residues 363 to 383 are Lumenal, vesicle-facing; that stretch reads ADETKEVITDNLPGSIRAVVN. A helical membrane pass occupies residues 384–404; sequence LFLVAKALLSYPLPFFAAVEV. Residues 405-438 are Cytoplasmic-facing; it reads LEKSLFQEGSRAFFPACYGGDGRLKSWGLTLRCA. Residues 439–459 form a helical membrane-spanning segment; sequence LVVFTLLMAIYVPHFALLMGL. Over 460–461 the chain is Lumenal, vesicle; it reads TG. The helical transmembrane segment at 462–482 threads the bilayer; it reads SLTGAGLCFLLPSLFHLRLLW. At 483 to 489 the chain is on the cytoplasmic side; it reads RKLLWHQ. A helical transmembrane segment spans residues 490 to 510; it reads VFFDVAIFVIGGICSVSGFVH. The Lumenal, vesicle segment spans residues 511–525; the sequence is SLEGLIEAYRTNAED.

It belongs to the amino acid/polyamine transporter 2 family. In terms of tissue distribution, brain and retina. Localized in horizontal cell tips at both rod and cone terminals.

Its subcellular location is the cytoplasmic vesicle membrane. It localises to the presynapse. It catalyses the reaction 4-aminobutanoate(out) + n H(+)(in) = 4-aminobutanoate(in) + n H(+)(out). The catalysed reaction is glycine(out) + n H(+)(in) = glycine(in) + n H(+)(out). It carries out the reaction beta-alanine(out) + n H(+)(in) = beta-alanine(in) + n H(+)(out). Its activity is regulated as follows. Chloride ions activate 4-aminobutanoate/H(+) transport. Antiporter that exchanges vesicular protons for cytosolic 4-aminobutanoate or to a lesser extend glycine, thus allowing their secretion from nerve terminals. The transport is equally dependent on the chemical and electrical components of the proton gradient. May also transport beta-alanine. Acidification of GABAergic synaptic vesicles is a prerequisite for 4-aminobutanoate uptake. This Mus musculus (Mouse) protein is Vesicular inhibitory amino acid transporter.